The following is a 478-amino-acid chain: Glutamyl-tRNA reductase (478 aa).

Substrate-binding positions include 49 to 52 (TCNR), Ser-109, 114 to 116 (EQQ), and Gln-120. Residue Cys-50 is the Nucleophile of the active site. Residue 191-196 (GAGSMG) coordinates NADP(+).

This sequence belongs to the glutamyl-tRNA reductase family. Homodimer.

It carries out the reaction (S)-4-amino-5-oxopentanoate + tRNA(Glu) + NADP(+) = L-glutamyl-tRNA(Glu) + NADPH + H(+). The protein operates within porphyrin-containing compound metabolism; protoporphyrin-IX biosynthesis; 5-aminolevulinate from L-glutamyl-tRNA(Glu): step 1/2. Its function is as follows. Catalyzes the NADPH-dependent reduction of glutamyl-tRNA(Glu) to glutamate 1-semialdehyde (GSA). This Rhodococcus opacus (strain B4) protein is Glutamyl-tRNA reductase.